The following is a 428-amino-acid chain: Adenylosuccinate synthetase (428 aa).

GTP is bound by residues 12–18 (GDEGKGK) and 40–42 (GHT). D13 acts as the Proton acceptor in catalysis. Residues D13 and G40 each coordinate Mg(2+). IMP is bound by residues 13 to 16 (DEGK), 38 to 41 (NAGH), T131, R145, Q226, T241, and R305. H41 (proton donor) is an active-site residue. Position 301–307 (301–307 (ATTGRKR)) interacts with substrate. GTP-binding positions include R307, 333–335 (KLD), and 415–417 (SVG).

This sequence belongs to the adenylosuccinate synthetase family. In terms of assembly, homodimer. The cofactor is Mg(2+).

Its subcellular location is the cytoplasm. The enzyme catalyses IMP + L-aspartate + GTP = N(6)-(1,2-dicarboxyethyl)-AMP + GDP + phosphate + 2 H(+). It functions in the pathway purine metabolism; AMP biosynthesis via de novo pathway; AMP from IMP: step 1/2. Plays an important role in the de novo pathway of purine nucleotide biosynthesis. Catalyzes the first committed step in the biosynthesis of AMP from IMP. The chain is Adenylosuccinate synthetase from Nitratidesulfovibrio vulgaris (strain DSM 19637 / Miyazaki F) (Desulfovibrio vulgaris).